Here is a 426-residue protein sequence, read N- to C-terminus: Casein kinase I (426 aa).

Positions 9–278 (YRISRKIGGG…LRKLLREMFV (270 aa)) constitute a Protein kinase domain. ATP-binding positions include 15-23 (IGGGSFGEI) and lysine 38. Residue aspartate 128 is the Proton acceptor of the active site. 2 disordered regions span residues 340 to 360 (TTTT…TVSN) and 377 to 426 (PSYN…PPAK). Polar residues predominate over residues 345–360 (SSSQPSNVKNISTVSN). Residues 386–404 (QSPQQTTTTTSSSNPNQTT) are compositionally biased toward low complexity. Polar residues predominate over residues 414 to 426 (PQSSSTTTKPPAK).

Belongs to the protein kinase superfamily. CK1 Ser/Thr protein kinase family. Casein kinase I subfamily. In terms of assembly, monomer. Post-translationally, autophosphorylated.

The protein resides in the cytoplasm. It localises to the nucleus. The enzyme catalyses L-seryl-[protein] + ATP = O-phospho-L-seryl-[protein] + ADP + H(+). It catalyses the reaction L-threonyl-[protein] + ATP = O-phospho-L-threonyl-[protein] + ADP + H(+). Functionally, casein kinases are operationally defined by their preferential utilization of acidic proteins such as caseins as substrates. Can phosphorylate a large number of proteins. May have a role in DNA repair mechanism and support vegetative growth of the cells. The chain is Casein kinase I (cak1-1) from Dictyostelium discoideum (Social amoeba).